The primary structure comprises 124 residues: Small ribosomal subunit protein uS12 (124 aa).

3-methylthioaspartic acid is present on Asp89.

It belongs to the universal ribosomal protein uS12 family. Part of the 30S ribosomal subunit. Contacts proteins S8 and S17. May interact with IF1 in the 30S initiation complex.

In terms of biological role, with S4 and S5 plays an important role in translational accuracy. Its function is as follows. Interacts with and stabilizes bases of the 16S rRNA that are involved in tRNA selection in the A site and with the mRNA backbone. Located at the interface of the 30S and 50S subunits, it traverses the body of the 30S subunit contacting proteins on the other side and probably holding the rRNA structure together. The combined cluster of proteins S8, S12 and S17 appears to hold together the shoulder and platform of the 30S subunit. This Photobacterium profundum (strain SS9) protein is Small ribosomal subunit protein uS12.